The primary structure comprises 177 residues: O-acetyl-ADP-ribose deacetylase (177 aa).

One can recognise a Macro domain in the interval 1-175; it reads MKSRIHVLQG…LYNRLLTQQG (175 aa). Substrate is bound by residues 11–12, N25, 33–35, and 122–126; these read DI, GVD, and STGVY. D35 functions as the Proton acceptor in the catalytic mechanism.

Belongs to the MacroD-type family. YmdB subfamily. Homodimer. Interacts with RNase III.

It carries out the reaction 3''-O-acetyl-ADP-D-ribose + H2O = ADP-D-ribose + acetate + H(+). The catalysed reaction is 2''-O-acetyl-ADP-D-ribose + H2O = ADP-D-ribose + acetate + H(+). Deacetylates O-acetyl-ADP ribose to yield ADP-ribose and free acetate. Down-regulates ribonuclease 3 (RNase III) activity. Acts by interacting directly with the region of the ribonuclease that is required for dimerization/activation. The protein is O-acetyl-ADP-ribose deacetylase of Escherichia fergusonii (strain ATCC 35469 / DSM 13698 / CCUG 18766 / IAM 14443 / JCM 21226 / LMG 7866 / NBRC 102419 / NCTC 12128 / CDC 0568-73).